A 316-amino-acid chain; its full sequence is Biotin synthase (316 aa).

The Radical SAM core domain occupies 42 to 268 (LCGESVDLCT…INPTAYIRMA (227 aa)). [4Fe-4S] cluster-binding residues include cysteine 60, cysteine 64, and cysteine 67. Residues serine 104, cysteine 136, cysteine 196, and arginine 266 each contribute to the [2Fe-2S] cluster site.

The protein belongs to the radical SAM superfamily. Biotin synthase family. Homodimer. [4Fe-4S] cluster serves as cofactor. It depends on [2Fe-2S] cluster as a cofactor.

The enzyme catalyses (4R,5S)-dethiobiotin + (sulfur carrier)-SH + 2 reduced [2Fe-2S]-[ferredoxin] + 2 S-adenosyl-L-methionine = (sulfur carrier)-H + biotin + 2 5'-deoxyadenosine + 2 L-methionine + 2 oxidized [2Fe-2S]-[ferredoxin]. Its pathway is cofactor biosynthesis; biotin biosynthesis; biotin from 7,8-diaminononanoate: step 2/2. Catalyzes the conversion of dethiobiotin (DTB) to biotin by the insertion of a sulfur atom into dethiobiotin via a radical-based mechanism. The sequence is that of Biotin synthase from Clostridium beijerinckii (strain ATCC 51743 / NCIMB 8052) (Clostridium acetobutylicum).